We begin with the raw amino-acid sequence, 213 residues long: Uridine kinase (213 aa).

Gly-15–Ser-22 lines the ATP pocket.

The protein belongs to the uridine kinase family.

The protein localises to the cytoplasm. It catalyses the reaction uridine + ATP = UMP + ADP + H(+). The enzyme catalyses cytidine + ATP = CMP + ADP + H(+). Its pathway is pyrimidine metabolism; CTP biosynthesis via salvage pathway; CTP from cytidine: step 1/3. It participates in pyrimidine metabolism; UMP biosynthesis via salvage pathway; UMP from uridine: step 1/1. In Escherichia coli O157:H7, this protein is Uridine kinase.